Reading from the N-terminus, the 831-residue chain is SID1 transmembrane family member 1 (831 aa).

The first 19 residues, 1 to 19 (MLDCPRLALLCALPWLLRA), serve as a signal peptide directing secretion. Residues 20–308 (AVPGHRAEPL…SVKGSVYVKS (289 aa)) lie on the Extracellular side of the membrane. N-linked (GlcNAc...) asparagine glycosylation is found at N67, N83, N136, and N281. The chain crosses the membrane as a helical span at residues 309-329 (SLFSVFVFLSFYLGCLLVVFV). Residues 330-441 (HHMRFQRKPV…DRRIVSKKYK (112 aa)) lie on the Cytoplasmic side of the membrane. A disordered region spans residues 354–408 (VSHPITASTPEGSNYGAIDESSSSPGRQMSSSDGGQPCHSDTDSSVEESDFDTMP). Residues 374–385 (SSSSPGRQMSSS) show a composition bias toward low complexity. A compositionally biased stretch (acidic residues) spans 397–408 (SSVEESDFDTMP). Residues 442 to 462 (IYFWNIITIAVFYALPVMQLV) traverse the membrane as a helical segment. Topologically, residues 463–493 (ITYQTVVNVTGNQDICYYNFLCAHPLGVLSA) are extracellular. The N-linked (GlcNAc...) asparagine glycan is linked to N470. The chain crosses the membrane as a helical span at residues 494–514 (FNNILSNLGHVLLGFLFLLIV). Residues 515–540 (LRRDLLHRRALEAKDIFAMEYGIPKH) are Cytoplasmic-facing. The chain crosses the membrane as a helical span at residues 541-561 (FGLFYAMGIALMMEGVLSACY). At 562 to 571 (HVCPNYSNFQ) the chain is on the extracellular side. An N-linked (GlcNAc...) asparagine glycan is attached at N566. A helical transmembrane segment spans residues 572–589 (FDTSFMYMIAGLCMLKLY). Residues 590-599 (QTRHPDINAS) are Cytoplasmic-facing. A helical membrane pass occupies residues 600-620 (AYSAYASFAVVITLTVLGVVF). The Extracellular portion of the chain corresponds to 621–625 (GKNDV). Residues 626–646 (WFWIIFSAIHVLASLALSTQI) traverse the membrane as a helical segment. The Cytoplasmic segment spans residues 647-687 (YYMGRFKIDVSDTDLGIFRRAAMVFYTDCIQQCSRPLYMDR). The helical transmembrane segment at 688 to 708 (MVLLIVGNLVNWSFALFGLIY) threads the bilayer. Residues 709 to 714 (RPRDFA) are Extracellular-facing. Residues 715–735 (SYMLGIFICNLLLYLAFYIIM) form a helical membrane-spanning segment. Residues 736–745 (KLRSSEKVLP) are Cytoplasmic-facing. A helical membrane pass occupies residues 746–766 (LPVFCIVATAVVWAAALYFFF). At 767 to 795 (QNLSSWEGTPAESREKNRECVLLGFFDDH) the chain is on the extracellular side. N-linked (GlcNAc...) asparagine glycosylation occurs at N768. A helical transmembrane segment spans residues 796–816 (DIWHFLSATALFFSFLVLLTL). The Cytoplasmic portion of the chain corresponds to 817–831 (DDDLDVVRRDQIPVF).

Belongs to the SID1 family.

Its subcellular location is the membrane. Its function is as follows. In vitro binds long double-stranded RNA (dsRNA) (500 and 700 base pairs), but not dsRNA shorter than 300 bp. Not involved in RNA autophagy, a process in which RNA is directly imported into lysosomes in an ATP-dependent manner, and degraded. This chain is SID1 transmembrane family member 1 (Sidt1), found in Rattus norvegicus (Rat).